The chain runs to 389 residues: Flap endonuclease 1 (389 aa).

Residues 1-110 (MGIKGLMKLL…GELAKRSDRR (110 aa)) are N-domain. D35 is a Mg(2+) binding site. Positions 48 and 76 each coordinate DNA. Position 92 (D92) interacts with Mg(2+). The interval 103–124 (LAKRSDRRQEAQKALEEATEKG) is disordered. Positions 128-259 (DIDRFNKRLV…KKAYAGIKEH (132 aa)) are I-domain. E164, E166, D185, and D187 together coordinate Mg(2+). A DNA-binding site is contributed by E164. Positions 237 and 239 each coordinate DNA. D239 contacts Mg(2+). The segment at 350–358 (SQKRLDSFF) is interaction with PCNA. The disordered stretch occupies residues 362–389 (PSANGAKKRKAPAAKGGKKAATAKKGKK). A compositionally biased stretch (basic residues) spans 367–389 (AKKRKAPAAKGGKKAATAKKGKK).

This sequence belongs to the XPG/RAD2 endonuclease family. FEN1 subfamily. Interacts with PCNA. Three molecules of FEN1 bind to one PCNA trimer with each molecule binding to one PCNA monomer. PCNA stimulates the nuclease activity without altering cleavage specificity. It depends on Mg(2+) as a cofactor. In terms of processing, phosphorylated. Phosphorylation upon DNA damage induces relocalization to the nuclear plasma.

Its subcellular location is the nucleus. It is found in the nucleolus. It localises to the nucleoplasm. The protein resides in the mitochondrion. Structure-specific nuclease with 5'-flap endonuclease and 5'-3' exonuclease activities involved in DNA replication and repair. During DNA replication, cleaves the 5'-overhanging flap structure that is generated by displacement synthesis when DNA polymerase encounters the 5'-end of a downstream Okazaki fragment. It enters the flap from the 5'-end and then tracks to cleave the flap base, leaving a nick for ligation. Also involved in the long patch base excision repair (LP-BER) pathway, by cleaving within the apurinic/apyrimidinic (AP) site-terminated flap. Acts as a genome stabilization factor that prevents flaps from equilibrating into structures that lead to duplications and deletions. Also possesses 5'-3' exonuclease activity on nicked or gapped double-stranded DNA, and exhibits RNase H activity. Also involved in replication and repair of rDNA and in repairing mitochondrial DNA. The sequence is that of Flap endonuclease 1 from Phytophthora infestans (strain T30-4) (Potato late blight agent).